The chain runs to 101 residues: Urease subunit beta (101 aa).

Belongs to the urease beta subunit family. Heterotrimer of UreA (gamma), UreB (beta) and UreC (alpha) subunits. Three heterotrimers associate to form the active enzyme.

Its subcellular location is the cytoplasm. It catalyses the reaction urea + 2 H2O + H(+) = hydrogencarbonate + 2 NH4(+). The protein operates within nitrogen metabolism; urea degradation; CO(2) and NH(3) from urea (urease route): step 1/1. This chain is Urease subunit beta, found in Cupriavidus pinatubonensis (strain JMP 134 / LMG 1197) (Cupriavidus necator (strain JMP 134)).